A 264-amino-acid polypeptide reads, in one-letter code: 3-methyl-2-oxobutanoate hydroxymethyltransferase (264 aa).

The Mg(2+) site is built by Asp-45 and Asp-84. Residues 45 to 46, Asp-84, and Lys-112 contribute to the 3-methyl-2-oxobutanoate site; that span reads DS. Glu-114 contributes to the Mg(2+) binding site. The active-site Proton acceptor is the Glu-181.

It belongs to the PanB family. In terms of assembly, homodecamer; pentamer of dimers. Mg(2+) is required as a cofactor.

The protein localises to the cytoplasm. It carries out the reaction 3-methyl-2-oxobutanoate + (6R)-5,10-methylene-5,6,7,8-tetrahydrofolate + H2O = 2-dehydropantoate + (6S)-5,6,7,8-tetrahydrofolate. Its pathway is cofactor biosynthesis; (R)-pantothenate biosynthesis; (R)-pantoate from 3-methyl-2-oxobutanoate: step 1/2. Catalyzes the reversible reaction in which hydroxymethyl group from 5,10-methylenetetrahydrofolate is transferred onto alpha-ketoisovalerate to form ketopantoate. In Vibrio parahaemolyticus serotype O3:K6 (strain RIMD 2210633), this protein is 3-methyl-2-oxobutanoate hydroxymethyltransferase.